The following is a 343-amino-acid chain: Methionine import ATP-binding protein MetN (343 aa).

In terms of domain architecture, ABC transporter spans Ile2–Ile241. Ser40–Thr46 contacts ATP. The C2 domain stretch occupies residues Cys265 to Val343. L-methionine is bound by residues Val278 to Leu283 and Asn295 to Ile296.

This sequence belongs to the ABC transporter superfamily. Methionine importer (TC 3.A.1.24) family. As to quaternary structure, the complex is composed of two ATP-binding proteins (MetN), two transmembrane proteins (MetI) and a solute-binding protein (MetQ).

Its subcellular location is the cell inner membrane. It catalyses the reaction L-methionine(out) + ATP + H2O = L-methionine(in) + ADP + phosphate + H(+). It carries out the reaction D-methionine(out) + ATP + H2O = D-methionine(in) + ADP + phosphate + H(+). With respect to regulation, ATPase activity is inhibited by intracellular L-methionine. Binding of methionine to the dimerized C-terminal regulatory domain stabilizes an inward-facing, ATPase-inactive conformation of the transporter, and as a consequence, the rate of ATP hydrolysis decreases. ADP is a competitive inhibitor. Part of the ABC transporter complex MetNIQ involved in methionine import. Responsible for energy coupling to the transport system. It has also been shown to be involved in formyl-L-methionine transport. The chain is Methionine import ATP-binding protein MetN from Escherichia coli (strain K12).